The following is a 113-amino-acid chain: UPF0145 protein MTH_544 (113 aa).

Belongs to the UPF0145 family.

This is UPF0145 protein MTH_544 from Methanothermobacter thermautotrophicus (strain ATCC 29096 / DSM 1053 / JCM 10044 / NBRC 100330 / Delta H) (Methanobacterium thermoautotrophicum).